Here is a 67-residue protein sequence, read N- to C-terminus: Large ribosomal subunit protein bL35 (67 aa).

This sequence belongs to the bacterial ribosomal protein bL35 family.

The sequence is that of Large ribosomal subunit protein bL35 from Bartonella quintana (strain Toulouse) (Rochalimaea quintana).